Consider the following 243-residue polypeptide: DNA repair protein RecO (243 aa).

This sequence belongs to the RecO family.

Its function is as follows. Involved in DNA repair and RecF pathway recombination. The polypeptide is DNA repair protein RecO (Vibrio parahaemolyticus serotype O3:K6 (strain RIMD 2210633)).